A 176-amino-acid polypeptide reads, in one-letter code: Ribosome maturation factor RimM (176 aa).

A PRC barrel domain is found at 100-173 (EGEFHLLDLV…WLRLTPPPGL (74 aa)).

The protein belongs to the RimM family. Binds ribosomal protein uS19.

It is found in the cytoplasm. Functionally, an accessory protein needed during the final step in the assembly of 30S ribosomal subunit, possibly for assembly of the head region. Essential for efficient processing of 16S rRNA. May be needed both before and after RbfA during the maturation of 16S rRNA. It has affinity for free ribosomal 30S subunits but not for 70S ribosomes. This is Ribosome maturation factor RimM from Prochlorococcus marinus (strain MIT 9303).